The chain runs to 480 residues: Vinorine hydroxylase (480 aa).

Residues 3–23 traverse the membrane as a helical segment; the sequence is LLQILLAIAGLLAILLLQKQW. Residue Cys-418 participates in heme binding.

It belongs to the cytochrome P450 family. The cofactor is heme. Mainly expressed in roots and, to a lesser extent, in leaves.

The protein resides in the membrane. It carries out the reaction vinorine + reduced [NADPH--hemoprotein reductase] + O2 = vomilenine + oxidized [NADPH--hemoprotein reductase] + H2O + H(+). It catalyses the reaction vomilenine = perakine. It participates in alkaloid biosynthesis; ajmaline biosynthesis. In terms of biological role, a cytochrome P450 monooxygenase involved in the biosynthesis of ajmaline-type monoterpenoid indole alkaloids (MIAs) natural products, important plant-derived pharmaceuticals used in the therapy of heart disorders. Catalyzes the hydroxylation of vinorine to vomilenine, an intermediate chemical in the biosynthesis of ajmaline. Supports also vomilenine isomerization to perakine. This is Vinorine hydroxylase from Rauvolfia serpentina (Serpentine wood).